Here is a 215-residue protein sequence, read N- to C-terminus: Methylosome subunit pICln (215 aa).

Disordered stretches follow at residues 88-120 (GDPP…DEDD) and 160-215 (HPDS…DADE). Composition is skewed to acidic residues over residues 105–120 (AEVD…DEDD), 167–190 (DSED…EDDA), and 203–215 (LDDD…DADE).

This sequence belongs to the pICln (TC 1.A.47) family. As to quaternary structure, component of the methylosome, a 20S complex containing at least CLNS1A/pICln, PRMT5/SKB1 and WDR77/MEP50; may mediate SNRPD1 and SNRPD3 methylation. Forms a 6S pICln-Sm complex composed of CLNS1A/pICln, SNRPD1, SNRPD2, SNRPE, SNRPF and SNRPG; ring-like structure where CLNS1A/pICln mimics additional Sm proteins and which is unable to assemble into the core snRNP.

The protein localises to the cytoplasm. The protein resides in the cytosol. Its subcellular location is the nucleus. It is found in the cytoskeleton. Involved in both the assembly of spliceosomal snRNPs and the methylation of Sm proteins. Chaperone that regulates the assembly of spliceosomal U1, U2, U4 and U5 small nuclear ribonucleoproteins (snRNPs), the building blocks of the spliceosome, and thereby plays an important role in the splicing of cellular pre-mRNAs. Most spliceosomal snRNPs contain a common set of Sm proteins SNRPB, SNRPD1, SNRPD2, SNRPD3, SNRPE, SNRPF and SNRPG that assemble in a heptameric protein ring on the Sm site of the small nuclear RNA to form the core snRNP (Sm core). In the cytosol, the Sm proteins SNRPD1, SNRPD2, SNRPE, SNRPF and SNRPG are trapped in an inactive 6S pICln-Sm complex by the chaperone CLNS1A that controls the assembly of the core snRNP. Dissociation by the SMN complex of CLNS1A from the trapped Sm proteins and their transfer to an SMN-Sm complex triggers the assembly of core snRNPs and their transport to the nucleus. This chain is Methylosome subunit pICln (icln), found in Drosophila melanogaster (Fruit fly).